Here is a 530-residue protein sequence, read N- to C-terminus: Calnexin homolog 1 (530 aa).

The N-terminal stretch at 1 to 20 is a signal peptide; that stretch reads MRQRQLFSVFLLLLAFVSFQ. Topologically, residues 21–466 are lumenal; the sequence is KLCYCDDQTV…EKAEQQPNLT (446 aa). Residues serine 34 and aspartate 65 each contribute to the Ca(2+) site. A disulfide bond links cysteine 108 and cysteine 143. An alpha-D-glucoside contacts are provided by tyrosine 112, lysine 114, tyrosine 134, and aspartate 141. The interval 216 to 315 is disordered; sequence ALIPAKTIPD…KCEAAPGCGE (100 aa). A p domain (Extended arm) region spans residues 223–356; sequence IPDPEDKKPE…RDIPNPDYFE (134 aa). Basic and acidic residues predominate over residues 224-240; that stretch reads PDPEDKKPEDWDERAKI. Tandem repeats lie at residues 225–236, 242–253, 261–272, 280–291, and 295–305. 2 4 X approximate repeats regions span residues 225–291 and 295–352; these read DPED…DWDD and GMWE…IPNP. The span at 250-281 shows a compositional bias: acidic residues; the sequence is DWDEDAPMEIEDEEAEKPEGWLDDEPEEVDDP. A disulfide bridge links cysteine 307 with cysteine 313. 3 repeat units span residues 314 to 324, 328 to 338, and 342 to 352. Residue glutamate 371 participates in an alpha-D-glucoside binding. Position 382 (aspartate 382) interacts with Ca(2+). Asparagine 464 carries an N-linked (GlcNAc...) asparagine glycan. The chain crosses the membrane as a helical span at residues 467 to 487; sequence IGVLVAIVVVFFSLFLKLIFG. The Cytoplasmic segment spans residues 488–530; the sequence is GKKAAAPVEKKKPEVAESSKSGDEAEKKEETAAPRKRQPRRDN. The interval 490 to 530 is disordered; it reads KAAAPVEKKKPEVAESSKSGDEAEKKEETAAPRKRQPRRDN. The span at 495 to 520 shows a compositional bias: basic and acidic residues; it reads VEKKKPEVAESSKSGDEAEKKEETAA. At serine 508 the chain carries Phosphoserine. Basic residues predominate over residues 521 to 530; sequence PRKRQPRRDN.

It belongs to the calreticulin family.

The protein resides in the endoplasmic reticulum membrane. Calcium-binding protein that interacts with newly synthesized monoglucosylated glycoproteins in the endoplasmic reticulum. It may act in assisting protein assembly and/or in the retention within the ER of unassembled protein subunits. It seems to play a major role in the quality control apparatus of the ER by the retention of incorrectly folded proteins. The polypeptide is Calnexin homolog 1 (CNX1) (Arabidopsis thaliana (Mouse-ear cress)).